The following is a 216-amino-acid chain: 3-isopropylmalate dehydratase small subunit (216 aa).

The protein belongs to the LeuD family. LeuD type 1 subfamily. In terms of assembly, heterodimer of LeuC and LeuD.

The enzyme catalyses (2R,3S)-3-isopropylmalate = (2S)-2-isopropylmalate. Its pathway is amino-acid biosynthesis; L-leucine biosynthesis; L-leucine from 3-methyl-2-oxobutanoate: step 2/4. In terms of biological role, catalyzes the isomerization between 2-isopropylmalate and 3-isopropylmalate, via the formation of 2-isopropylmaleate. The sequence is that of 3-isopropylmalate dehydratase small subunit from Burkholderia ambifaria (strain MC40-6).